The primary structure comprises 452 residues: MAEAAAAGASGETMAALVAAEGSLGPAGWSAGRSFSNYRPFEPQTLGFSPSWRLTSFSGMKGUGCKVPQETLLKLLEGLTRPALQPPLTSGLVGGQEETVQEGGLSTRPGPGSAFPSLSIGMDSCVIPLRHGGLSLVQTTDFFYPLVEDPYMMGRIACANVLSDLYAMGITECDNMLMLLSVSQSMSEKEREKVTPLMIKGFRDAAEEGGTAVTGGQTVVNPWIIIGGVATVVCQQNEFIMPDSAVVGDVLVLTKPLGTQVAANAHQWLDNPEKWNKIKMVVSREEVELAYQEAMFNMATLNRTAAGLMHTFNAHAATDITGFGILGHSQNLAKQQKNEVSFVIHNLPIIAKMAAISKASGRFGLLQGTSAETSGGLLICLPREQAARFCSEIKSSKYGEGHQAWIVGIVEKGNRTARIIDKPRVIEVLPRGASAAAAAAPDNSNAASEPSS.

Ala2 carries the post-translational modification N-acetylalanine. The residue at position 49 (Ser49) is a Phosphoserine. The active site involves Sec63. A non-standard amino acid (selenocysteine) is located at residue Sec63. Lys66 serves as a coordination point for ATP. The tract at residues 86 to 111 (PPLTSGLVGGQEETVQEGGLSTRPGP) is disordered. The span at 95–105 (GQEETVQEGGL) shows a compositional bias: low complexity. Residues 121-123 (GMD), Asp141, Asp164, and 215-218 (GGQT) contribute to the ATP site. Residue Asp123 participates in Mg(2+) binding. Asp164 contributes to the Mg(2+) binding site. Asp319 lines the Mg(2+) pocket.

It belongs to the selenophosphate synthase 1 family. Class I subfamily. In terms of assembly, homodimer. Mg(2+) serves as cofactor. Truncated SEPHS2 proteins produced by failed UGA/Sec decoding are ubiquitinated by the CRL2(KLHDC3) complex, which recognizes the glycine (Gly) at the C-terminus of truncated SEPHS2 proteins.

It catalyses the reaction hydrogenselenide + ATP + H2O = selenophosphate + AMP + phosphate + 2 H(+). Functionally, synthesizes selenophosphate from selenide and ATP. The protein is Selenide, water dikinase 2 (Sephs2) of Mus musculus (Mouse).